Here is a 506-residue protein sequence, read N- to C-terminus: ATP synthase subunit alpha (506 aa).

170–177 (GDRQTGKT) is a binding site for ATP.

The protein belongs to the ATPase alpha/beta chains family. As to quaternary structure, F-type ATPases have 2 components, CF(1) - the catalytic core - and CF(0) - the membrane proton channel. CF(1) has five subunits: alpha(3), beta(3), gamma(1), delta(1), epsilon(1). CF(0) has four main subunits: a(1), b(1), b'(1) and c(9-12).

Its subcellular location is the cellular thylakoid membrane. It carries out the reaction ATP + H2O + 4 H(+)(in) = ADP + phosphate + 5 H(+)(out). In terms of biological role, produces ATP from ADP in the presence of a proton gradient across the membrane. The alpha chain is a regulatory subunit. This chain is ATP synthase subunit alpha, found in Synechococcus sp. (strain CC9311).